The chain runs to 179 residues: Large ribosomal subunit protein uL6 (179 aa).

Belongs to the universal ribosomal protein uL6 family. Part of the 50S ribosomal subunit.

Functionally, this protein binds to the 23S rRNA, and is important in its secondary structure. It is located near the subunit interface in the base of the L7/L12 stalk, and near the tRNA binding site of the peptidyltransferase center. This chain is Large ribosomal subunit protein uL6, found in Kineococcus radiotolerans (strain ATCC BAA-149 / DSM 14245 / SRS30216).